The following is a 317-amino-acid chain: Melanocyte-stimulating hormone receptor (317 aa).

Positions 1–23 are disordered; that stretch reads MSGQGPQRRLLGSPNATSPTTPH. The Extracellular segment spans residues 1–37; the sequence is MSGQGPQRRLLGSPNATSPTTPHFKLAANQTGPRCLE. A glycan (N-linked (GlcNAc...) asparagine) is linked at Asn-29. The helical transmembrane segment at 38–63 threads the bilayer; that stretch reads VSIPNGLFLSLGLVSVVENVLVVAAI. Topologically, residues 64–72 are cytoplasmic; the sequence is AKNRNLHSP. A helical membrane pass occupies residues 73–93; that stretch reads MYYFIGCLAVSDLLVSVTNVL. Topologically, residues 94-118 are extracellular; it reads ETAVMLLVEAGALAAQAAVVQQLDD. The helical transmembrane segment at 119–140 threads the bilayer; sequence IIDVLICGSMVSSLCFLGAIAV. At 141-163 the chain is on the cytoplasmic side; it reads DRYLSIFYALRYHSIVTLPRAWR. A helical transmembrane segment spans residues 164 to 183; the sequence is AISAIWVASVLSSTLFIAYY. The Extracellular segment spans residues 184–191; it reads NHTAVLLC. Residues 192 to 211 traverse the membrane as a helical segment; it reads LVSFFVAMLVLMAVLYVHML. At 212–240 the chain is on the cytoplasmic side; sequence ARARQHARGIARLRKRQHSVHQGFGLKGA. Residues 241–266 form a helical membrane-spanning segment; that stretch reads ATLTILLGIFFLCWGPFFLHLSLMVL. Residues 267–279 are Extracellular-facing; sequence CPQHPICGCVFQN. The chain crosses the membrane as a helical span at residues 280–300; the sequence is FNLFLTLIICNSIIDPFIYAF. Residues 301-317 lie on the Cytoplasmic side of the membrane; the sequence is RSQELRKTLQEVVLCSW. A lipid anchor (S-palmitoyl cysteine) is attached at Cys-315.

Belongs to the G-protein coupled receptor 1 family. As to quaternary structure, interacts with MGRN1, but does not undergo MGRN1-mediated ubiquitination; this interaction competes with GNAS-binding and thus inhibits agonist-induced cAMP production. Interacts with OPN3; the interaction results in a decrease in MC1R-mediated cAMP signaling and ultimately a decrease in melanin production in melanocytes.

It localises to the cell membrane. Functionally, receptor for MSH (alpha, beta and gamma) and ACTH. The activity of this receptor is mediated by G proteins which activate adenylate cyclase. Mediates melanogenesis, the production of eumelanin (black/brown) and phaeomelanin (red/yellow), via regulation of cAMP signaling in melanocytes. The chain is Melanocyte-stimulating hormone receptor (MC1R) from Vulpes vulpes (Red fox).